A 244-amino-acid polypeptide reads, in one-letter code: MSFEGKIALVTGASRGIGRAIAETLVARGAKVIGTATSENGAKNISDYLGANGKGLMLNVTDPASIESVLENIRAEFGEVDILVNNAGITRDNLLMRMKDDEWNDIIETNLSSVFRLSKAVMRAMMKKRCGRIITIGSVVGTMGNAGQANYAAAKAGLIGFSKSLAREVASRGITVNVVAPGFIETDMTRALSDDQRAGILAQVPAGRLGGAQEIASAVAFLASDEASYITGETLHVNGGMYMV.

NADP(+)-binding positions include 12–15 (GASR) and threonine 37. Positions 50 and 53 each coordinate Ca(2+). NADP(+) is bound by residues 59–60 (NV) and asparagine 86. Serine 138 serves as a coordination point for substrate. Asparagine 145 lines the Ca(2+) pocket. Tyrosine 151 (proton acceptor) is an active-site residue. Residues 151-155 (YAAAK) and isoleucine 184 each bind NADP(+). The Ca(2+) site is built by glutamate 233 and threonine 234.

This sequence belongs to the short-chain dehydrogenases/reductases (SDR) family. As to quaternary structure, homotetramer.

It catalyses the reaction a (3R)-hydroxyacyl-[ACP] + NADP(+) = a 3-oxoacyl-[ACP] + NADPH + H(+). It functions in the pathway lipid metabolism; fatty acid biosynthesis. Its function is as follows. Catalyzes the NADPH-dependent reduction of beta-ketoacyl-ACP substrates to beta-hydroxyacyl-ACP products, the first reductive step in the elongation cycle of fatty acid biosynthesis. This is 3-oxoacyl-[acyl-carrier-protein] reductase FabG (fabG) from Salmonella typhi.